We begin with the raw amino-acid sequence, 66 residues long: Neurotoxin BmK AGP-SYPU1 (66 aa).

Positions 2-64 (RDAYIAQNYN…KPIRIPGKCH (63 aa)) constitute an LCN-type CS-alpha/beta domain. Intrachain disulfides connect Cys12-Cys63, Cys16-Cys36, Cys22-Cys46, and Cys26-Cys48. Positions 65–66 (RR) are cleaved as a propeptide — removed by a carboxypeptidase.

As to expression, expressed by the venom gland.

The protein resides in the secreted. Alpha toxins bind voltage-independently at site-3 of sodium channels (Nav) and inhibit the inactivation of the activated channels, thereby blocking neuronal transmission. This toxin has a strong analgesic effect when administered to mice by intraperitoneal injection. In Olivierus martensii (Manchurian scorpion), this protein is Neurotoxin BmK AGP-SYPU1.